We begin with the raw amino-acid sequence, 61 residues long: Short neurotoxin 1 (61 aa).

4 disulfide bridges follow: C3–C23, C17–C40, C42–C53, and C54–C59.

It belongs to the three-finger toxin family. Short-chain subfamily. Type I alpha-neurotoxin sub-subfamily. Expressed by the venom gland.

It localises to the secreted. Binds to muscle nicotinic acetylcholine receptor (nAChR) and inhibit acetylcholine from binding to the receptor, thereby impairing neuromuscular transmission. This Naja philippinensis (Philippine cobra) protein is Short neurotoxin 1.